Consider the following 143-residue polypeptide: MAKKKAISWIKLQVPAAQAAPGAKIGQALGPHGVSGPQFVKEFNERTAKMEPGIVVPVIITVYSDKSFSFIVKTPPASILIKKAIGIESGSKKSNTDKVGTISKEKLMEIVRIKMPDLNAKSESAAFKIISGSARSMGVEVEK.

It belongs to the universal ribosomal protein uL11 family. Part of the ribosomal stalk of the 50S ribosomal subunit. Interacts with L10 and the large rRNA to form the base of the stalk. L10 forms an elongated spine to which L12 dimers bind in a sequential fashion forming a multimeric L10(L12)X complex. Post-translationally, one or more lysine residues are methylated.

Forms part of the ribosomal stalk which helps the ribosome interact with GTP-bound translation factors. This Borreliella afzelii (strain PKo) (Borrelia afzelii) protein is Large ribosomal subunit protein uL11.